The following is a 478-amino-acid chain: Trigger factor (478 aa).

The segment covering 154-167 (MAKDSRSFEPREEG) has biased composition (basic and acidic residues). 2 disordered regions span residues 154–173 (MAKD…AQSG) and 441–478 (KEAL…KAAG). Positions 173-258 (GDRVTIDFVG…VKAVAAPGET (86 aa)) constitute a PPIase FKBP-type domain.

The protein belongs to the FKBP-type PPIase family. Tig subfamily.

The protein localises to the cytoplasm. The catalysed reaction is [protein]-peptidylproline (omega=180) = [protein]-peptidylproline (omega=0). Involved in protein export. Acts as a chaperone by maintaining the newly synthesized protein in an open conformation. Functions as a peptidyl-prolyl cis-trans isomerase. The sequence is that of Trigger factor from Methylorubrum extorquens (strain CM4 / NCIMB 13688) (Methylobacterium extorquens).